The sequence spans 356 residues: Vesicular integral-membrane protein VIP36 (356 aa).

The signal sequence occupies residues 1-44 (MAAEGWIWRWGWGRRCLGRPGLLGPGPGPTTPLFLLLLLGSVTA). At 45-322 (DITDGNSEHL…FRSGPLTGWR (278 aa)) the chain is on the lumenal side. Positions 52-276 (EHLKREHSLI…DIISMKLFQL (225 aa)) constitute an L-type lectin-like domain. A carbohydrate is bound by residues S96 and D131. D162, Y164, and N166 together coordinate Ca(2+). An a carbohydrate-binding site is contributed by 164 to 166 (YPN). N-linked (GlcNAc...) asparagine glycosylation occurs at N183. H190 contacts a carbohydrate. Ca(2+) is bound at residue D193. C202 and C239 are disulfide-bonded. 260 to 262 (GDL) is an a carbohydrate binding site. A helical membrane pass occupies residues 323–345 (VFLLLLCALLGIVVCAVVGAVVF). Residues 346-356 (QKRQERNKRFY) are Cytoplasmic-facing.

The cofactor is Ca(2+). Ubiquitous.

Its subcellular location is the endoplasmic reticulum-Golgi intermediate compartment membrane. It is found in the golgi apparatus membrane. The protein localises to the endoplasmic reticulum membrane. Plays a role as an intracellular lectin in the early secretory pathway. Interacts with N-acetyl-D-galactosamine and high-mannose type glycans and may also bind to O-linked glycans. Involved in the transport and sorting of glycoproteins carrying high mannose-type glycans. The polypeptide is Vesicular integral-membrane protein VIP36 (LMAN2) (Homo sapiens (Human)).